Reading from the N-terminus, the 308-residue chain is Carbonic anhydrase 6 (308 aa).

Positions 1 to 17 (MRALVLLLSLFLLGGQA) are cleaved as a signal peptide. Residues 21–278 (SDWTYSEGAL…LNHRVVESNF (258 aa)) enclose the Alpha-carbonic anhydrase domain. Cysteines 42 and 224 form a disulfide. Asn-67 is a glycosylation site (N-linked (GlcNAc...) asparagine). His-85 serves as the catalytic Proton donor/acceptor. Positions 111, 113, and 138 each coordinate Zn(2+). 220–221 (TT) contacts substrate. Asn-256 carries an N-linked (GlcNAc...) asparagine glycan.

This sequence belongs to the alpha-carbonic anhydrase family. It depends on Zn(2+) as a cofactor. Major constituent of saliva.

The protein localises to the secreted. The enzyme catalyses hydrogencarbonate + H(+) = CO2 + H2O. Inhibited by coumarins, sulfonamide derivatives such as acetazolamide (AZA), saccharin and Foscarnet (phosphonoformate trisodium salt). Its function is as follows. Reversible hydration of carbon dioxide. Its role in saliva is unknown. The chain is Carbonic anhydrase 6 (CA6) from Homo sapiens (Human).